The chain runs to 904 residues: Toll-like receptor 3 (904 aa).

Residues 1-26 (MSRPLPYHIHFFSGLLTCWILCTSSA) form the signal peptide. An LRRNT domain is found at 27 to 52 (HKCTVRHEVADCSHLKLTQIPDDLPT). Residues 27–705 (HKCTVRHEVA…PCKDSAPFEL (679 aa)) lie on the Lumenal side of the membrane. A disulfide bond links Cys-29 and Cys-38. N-linked (GlcNAc...) asparagine glycosylation is found at Asn-53, Asn-58, and Asn-71. LRR repeat units lie at residues 53 to 74 (NITVLNLTHNQLRRLPPANFTR), 77 to 98 (QLTTLDGGFNSISKLEPELCQS), 101 to 122 (WLEILNLQHNEISQLSDKTFIF), 125 to 146 (NLTELHLMSNSIQKIKNDPFKN), 149 to 170 (NLIKLDLSHNGLSSTKLGTQLQ), and 173 to 194 (NLQELLLSNNKISSLTPGEFDF). A disulfide bridge links Cys-96 with Cys-123. Asn-125 carries an N-linked (GlcNAc...) asparagine glycan. A glycan (N-linked (GlcNAc...) asparagine) is linked at Asn-197. LRR repeat units lie at residues 199 to 220 (SLKRLELSSNQIKEFSPGCFHT) and 223 to 245 (ELSGLSLNNAKLSPSLTEKLCLE). 4 N-linked (GlcNAc...) asparagine glycosylation sites follow: Asn-248, Asn-253, Asn-276, and Asn-292. 14 LRR repeats span residues 250–271 (SIENLSLSSNQLDTISHTTFDG), 276–297 (NLTTLDLSRNSLRVMGNDSFAW), 300–321 (HLEYLSLEYNNIEHLSSRSFYG), 324–345 (NLRRLDLRRSFTRQSISLTSLP), 357–378 (CLEYLNMDDNNFPGIKRNTFTG), 381–401 (RLKFLSLSNSFSSLRTLTNET), 409–430 (PLLLLDLTKNKISKIQSGAFSW), 433–455 (HLEVLDLGLNEIGQELTGQEWRG), 466–487 (YNKYLELTTNSFTSVPSLQRLM), 508–529 (NLVILDLSNNNIANINDELLKG), 532–553 (KLEILDLQHNNLARLWKHANPG), 564–585 (HLHILNLGSNGFDEIPVEAFKD), 588–609 (ELKSIDLGMNNLNILPQSVFDN), and 612–633 (SLKSLSLQKNLITSVQKTVFGP). The N-linked (GlcNAc...) asparagine glycan is linked to Asn-399. Asn-637, Asn-663, and Asn-668 each carry an N-linked (GlcNAc...) asparagine glycan. Residues 646–699 (NPFDCTCESIAWFVNWINITHTNISELSNHYLCNTPPQYHGYPVMLFDVSPCKD) enclose the LRRCT domain. Cystine bridges form between Cys-650–Cys-678 and Cys-652–Cys-697. Residues 706 to 726 (LFMININILLIFIFIVLLIHF) traverse the membrane as a helical segment. Residues 727-904 (EGWRISFYWN…VALGSRNSAH (178 aa)) are Cytoplasmic-facing. The 144-residue stretch at 754–897 (FEYAAYIIHA…AFHHKLKVAL (144 aa)) folds into the TIR domain. Tyr-759 bears the Phosphotyrosine mark. Glycyl lysine isopeptide (Lys-Gly) (interchain with G-Cter in ubiquitin) cross-links involve residues Lys-765, Lys-812, and Lys-831. Phosphotyrosine is present on Tyr-858.

Belongs to the Toll-like receptor family. As to quaternary structure, monomer and homodimer; dimerization is triggered by ligand-binding, the signaling unit is composed of one ds-RNA of around 40 bp and two TLR3 molecules, and lateral clustering of signaling units along the length of the ds-RNA ligand is required for TLR3 signal transduction. Interacts (via transmembrane domain) with UNC93B1; the interaction is required for transport from the ER to the endosomes. Interacts with TICAM1 (via the TIR domain) in response to poly(I:C) and this interaction is enhanced in the presence of WDFY1. Interacts with SRC; upon binding of double-stranded RNA. The tyrosine-phosphorylated form (via TIR domain) interacts with WDFY1 (via WD repeat 2) in response to poly(I:C). Post-translationally, TLR3 signaling requires a proteolytic cleavage mediated by cathepsins CTSB and CTSH, the cleavage occurs between amino acids 252 and 346. The cleaved form of TLR3 is the predominant form found in endosomes. Ubiquitinated by TRIM3; leading to recognition and sorting of polyubiquitinated TLR3 by the ESCRT complexes. Ubiquitinated by ZNRF1 via 'Lys-63'-linked ubiquitin chains; leading to TLR3 lysosomal trafficking and degradation. Ubiquitinated by RNF170 at Lys-765 via 'Lys-48'-linked ubiquitin chains; leading to TLR3 proteasomal degradation.

It is found in the endoplasmic reticulum membrane. The protein localises to the endosome membrane. Its subcellular location is the early endosome. Key component of innate and adaptive immunity. TLRs (Toll-like receptors) control host immune response against pathogens through recognition of molecular patterns specific to microorganisms. TLR3 is a nucleotide-sensing TLR which is activated by double-stranded RNA, a sign of viral infection. Acts via the adapter TRIF/TICAM1, leading to NF-kappa-B activation, IRF3 nuclear translocation, cytokine secretion and the inflammatory response. This is Toll-like receptor 3 (TLR3) from Bos taurus (Bovine).